Consider the following 150-residue polypeptide: Large ribosomal subunit protein bL9 (150 aa).

Belongs to the bacterial ribosomal protein bL9 family.

In terms of biological role, binds to the 23S rRNA. The polypeptide is Large ribosomal subunit protein bL9 (Leptothrix cholodnii (strain ATCC 51168 / LMG 8142 / SP-6) (Leptothrix discophora (strain SP-6))).